The sequence spans 491 residues: MATQWEVVIGLETHAQLSTVSKIFSGASTQFGAEPNTQACPVDLALPGVLPVLNRGAVERAIRFGLAIGSTIAPRSIFARKNYFYPDLPKGYQISQYEIPVVQGGQITIQVPANEKAGKAAYEKTVNLTRAHLEEDAGKSLHEDFAGMTGIDLNRAGTPLLEIVTEPEMRSAAEAVAYAKALHGLVVWLGICDGNMQEGSFRCDANVSVRPVGQEKFGTRAEIKNLNSFRFLEEAINYEVRRQIELIEDGGEVVQETRLYDPDKRETRSMRSKEDAHDYRYFPDPDLMPLVIGQDWIERVQSGMPELPAAMQQRFVDEYGVSAYDAGVLTSSKAMAAYFEAVVAKAGAANAKIAANWLMGDVSSQLNRDGIEIDAIPVSAAQLALLLQRIADGTISNKIAKEIFATIWDEKATDEGAADRIIDAKGLKQISDTGALEAIIDEVLAANAKSVEEFRAGKEKAFNALIGQAMKATKGKANPQQVNELLKKKLG.

This sequence belongs to the GatB/GatE family. GatB subfamily. In terms of assembly, heterotrimer of A, B and C subunits.

The enzyme catalyses L-glutamyl-tRNA(Gln) + L-glutamine + ATP + H2O = L-glutaminyl-tRNA(Gln) + L-glutamate + ADP + phosphate + H(+). The catalysed reaction is L-aspartyl-tRNA(Asn) + L-glutamine + ATP + H2O = L-asparaginyl-tRNA(Asn) + L-glutamate + ADP + phosphate + 2 H(+). In terms of biological role, allows the formation of correctly charged Asn-tRNA(Asn) or Gln-tRNA(Gln) through the transamidation of misacylated Asp-tRNA(Asn) or Glu-tRNA(Gln) in organisms which lack either or both of asparaginyl-tRNA or glutaminyl-tRNA synthetases. The reaction takes place in the presence of glutamine and ATP through an activated phospho-Asp-tRNA(Asn) or phospho-Glu-tRNA(Gln). In Burkholderia cenocepacia (strain ATCC BAA-245 / DSM 16553 / LMG 16656 / NCTC 13227 / J2315 / CF5610) (Burkholderia cepacia (strain J2315)), this protein is Aspartyl/glutamyl-tRNA(Asn/Gln) amidotransferase subunit B.